A 301-amino-acid polypeptide reads, in one-letter code: Chitosanase (301 aa).

An N-terminal signal peptide occupies residues 1 to 42 (MHMSNARPSKSRTKFLLAFLCFTLMASLFGATALFGPSKAAA). The Proton donor role is filled by Glu79. An intrachain disulfide couples Cys92 to Cys166. Asp97 serves as the catalytic Nucleophile.

Belongs to the glycosyl hydrolase 46 family.

The protein localises to the secreted. The enzyme catalyses Endohydrolysis of beta-(1-&gt;4)-linkages between D-glucosamine residues in a partly acetylated chitosan.. In terms of biological role, aids in the defense against invading fungal pathogens by degrading their cell wall chitosan. This is Chitosanase (csn) from Niallia circulans (Bacillus circulans).